Here is a 335-residue protein sequence, read N- to C-terminus: Nucleoid-associated protein SeAg_B2375 (335 aa).

Belongs to the YejK family.

Its subcellular location is the cytoplasm. The protein resides in the nucleoid. This is Nucleoid-associated protein SeAg_B2375 from Salmonella agona (strain SL483).